A 550-amino-acid chain; its full sequence is Major fimbrium tip subunit FimE (550 aa).

Positions 1–21 (MKSKSIIAQLLYVLIAFMAVS) are cleaved as a signal peptide. A lipid anchor (N-palmitoyl cysteine) is attached at C22. The S-diacylglycerol cysteine moiety is linked to residue C22. A propeptide spanning residues 22–51 (CVADKSEPCPSGEPTRVSGSIVSLEHHGLR) is cleaved from the precursor.

This sequence belongs to the FimE family. In terms of assembly, fimbriae are composed of a major, structural subunit and the minor components FimC, FimD and FimE. Identified in a complex composed of FimC, FimD and FimE (in vitro). Does not directly interact with host proteins, but only as a complex with FimC and FimD.

The protein resides in the fimbrium. The protein localises to the cell outer membrane. In terms of biological role, probably a component of the fimbrium tip; required for incorporation of FimC and FimD into fimbriae. These long, filamentous pili are attached to the cell surface; they mediate biofilm formation, adhesion onto host cells and onto other bacteria that are part of the oral microbiome. They play an important role in invasion of periodontal tissues and are major virulence factors. FimC, FimD and FimE contribute to interaction with host CXCR4 and thereby down-regulate the TLR2-mediated host immune response. This is Major fimbrium tip subunit FimE from Porphyromonas gingivalis (strain ATCC 33277 / DSM 20709 / CIP 103683 / JCM 12257 / NCTC 11834 / 2561).